We begin with the raw amino-acid sequence, 1476 residues long: Cystic fibrosis transmembrane conductance regulator (1476 aa).

The Cytoplasmic segment spans residues Met-1–Phe-77. Residues Val-78–Gln-98 form a helical membrane-spanning segment. One can recognise an ABC transmembrane type-1 1 domain in the interval Phe-81–Leu-365. Residues Pro-99–Tyr-122 lie on the Extracellular side of the membrane. A helical transmembrane segment spans residues Leu-123–His-146. At His-147–Leu-195 the chain is on the cytoplasmic side. The chain crosses the membrane as a helical span at residues Ala-196–Trp-216. Over Asp-217–Ser-222 the chain is Extracellular. Residues Ala-223–Met-243 traverse the membrane as a helical segment. Residues Met-244 to Arg-298 are Cytoplasmic-facing. A helical transmembrane segment spans residues Ser-299–Phe-319. Residues Leu-320–Thr-339 are Extracellular-facing. The chain crosses the membrane as a helical span at residues Ile-340–Val-358. The Cytoplasmic segment spans residues Gln-359 to Gly-853. Residues Trp-401, Gly-458 to Thr-465, and Gln-493 each bind ATP. Residues Val-412 to Gly-646 form the ABC transporter 1 domain. Residue Cys-524 is the site of S-palmitoyl cysteine attachment. Ser-549 and Ser-660 each carry phosphoserine. A disordered R region region spans residues Thr-654–Glu-826. Ser-670 bears the Phosphoserine; by PKA mark. 3 positions are modified to phosphoserine: Ser-684, Ser-698, and Ser-710. Thr-715 bears the Phosphothreonine mark. Residues Ser-732, Ser-763, Ser-785, Ser-790, and Ser-808 each carry the phosphoserine modification. The helical transmembrane segment at Leu-854–Phe-874 threads the bilayer. In terms of domain architecture, ABC transmembrane type-1 2 spans Leu-854 to Arg-1153. The Extracellular portion of the chain corresponds to Val-875–Ile-913. N-linked (GlcNAc...) asparagine glycosylation is found at Asn-889 and Asn-895. Residues Tyr-914–His-934 form a discontinuously helical membrane-spanning segment. Residues Thr-935 to Thr-985 lie on the Cytoplasmic side of the membrane. Residues Ile-986–Leu-1006 traverse the membrane as a helical segment. Residues Gln-1007–Pro-1008 lie on the Extracellular side of the membrane. A helical transmembrane segment spans residues Tyr-1009 to Leu-1029. Topologically, residues His-1030–Thr-1090 are cytoplasmic. A helical membrane pass occupies residues Leu-1091–Phe-1111. Over Ile-1112–Gly-1125 the chain is Extracellular. A helical membrane pass occupies residues Ile-1126–Ile-1146. Topologically, residues Asp-1147–Leu-1476 are cytoplasmic. An ABC transporter 2 domain is found at Val-1208–Ser-1439. ATP contacts are provided by residues Tyr-1215 and Gly-1240–Ser-1247. Positions Arg-1382–Leu-1476 are interaction with GORASP2. Cys-1391 carries the S-palmitoyl cysteine lipid modification. Residues Ser-1440 and Ser-1452 each carry the phosphoserine modification. Positions Leu-1445–Pro-1456 are enriched in basic residues. The interval Leu-1445–Leu-1476 is disordered. The span at Glu-1466 to Leu-1476 shows a compositional bias: acidic residues. Residues Thr-1474–Leu-1476 carry the PDZ-binding motif.

Belongs to the ABC transporter superfamily. ABCC family. CFTR transporter (TC 3.A.1.202) subfamily. Monomer; does not require oligomerization for channel activity. May form oligomers in the membrane. Interacts with SLC4A7 through NHERF1. Interacts with SHANK2. Interacts with NHERF1 and MYO6. Interacts (via C-terminus) with GOPC (via PDZ domain); this promotes CFTR internalization and thereby decreases channel activity. Interacts with SLC4A7 through NHERF1. Found in a complex with MYO5B and RAB11A. Interacts with ANO1. Interacts with SLC26A8. Interacts with AHCYL1; the interaction increases CFTR activity. Interacts with CSE1L. The core-glycosylated form interacts with GORASP2 (via PDZ GRASP-type 1 domain) in respone to ER stress. Interacts with MARCHF2; the interaction leads to CFTR ubiqtuitination and degradation. Interacts with ADGRG2. In terms of processing, N-glycosylated. Post-translationally, phosphorylated; cAMP treatment promotes phosphorylation and activates the channel. Dephosphorylation decreases the ATPase activity (in vitro). Phosphorylation at PKA sites activates the channel. Phosphorylation at PKC sites enhances the response to phosphorylation by PKA. Phosphorylated by AMPK; this inhibits channel activity. Ubiquitinated, leading to its degradation in the lysosome. Deubiquitination by USP10 in early endosomes enhances its endocytic recycling to the cell membrane. Ubiquitinated by RNF185 during ER stress. Ubiquitinated by MARCHF2. Detected in epithelial cells in nasopharynx, submandibular gland, pancreas and ileum (at protein level). Expressed in the epididymis. In the caput section of the epididymis, expressed uniformly on both the luminal and basolateral sides of the ducts and on sperm in the caput lumen (at protein level). In the cauda, detected along the luminal border but not continuously and is also expressed on the basolateral surface. Within the caudal lumen, detected on sperm.

It is found in the apical cell membrane. Its subcellular location is the early endosome membrane. The protein localises to the cell membrane. The protein resides in the recycling endosome membrane. It localises to the endoplasmic reticulum membrane. It is found in the nucleus. It carries out the reaction ATP + H2O + closed Cl(-) channel = ADP + phosphate + open Cl(-) channel.. The catalysed reaction is chloride(in) = chloride(out). The enzyme catalyses hydrogencarbonate(in) = hydrogencarbonate(out). It catalyses the reaction ATP + H2O = ADP + phosphate + H(+). Epithelial ion channel that plays an important role in the regulation of epithelial ion and water transport and fluid homeostasis. Mediates the transport of chloride ions across the cell membrane. Possesses an intrinsic ATPase activity and utilizes ATP to gate its channel; the passive flow of anions through the channel is gated by cycles of ATP binding and hydrolysis by the ATP-binding domains. The ion channel is also permeable to HCO(3)(-); selectivity depends on the extracellular chloride concentration. Exerts its function also by modulating the activity of other ion channels and transporters. Contributes to the regulation of the pH and the ion content of the epithelial fluid layer. Modulates the activity of the epithelial sodium channel (ENaC) complex, in part by regulating the cell surface expression of the ENaC complex. May regulate bicarbonate secretion and salvage in epithelial cells by regulating the transporter SLC4A7. Can inhibit the chloride channel activity of ANO1. Plays a role in the chloride and bicarbonate homeostasis during sperm epididymal maturation and capacitation. This Rattus norvegicus (Rat) protein is Cystic fibrosis transmembrane conductance regulator.